A 593-amino-acid polypeptide reads, in one-letter code: DNA mismatch repair protein MutL (593 aa).

The protein belongs to the DNA mismatch repair MutL/HexB family.

Functionally, this protein is involved in the repair of mismatches in DNA. It is required for dam-dependent methyl-directed DNA mismatch repair. May act as a 'molecular matchmaker', a protein that promotes the formation of a stable complex between two or more DNA-binding proteins in an ATP-dependent manner without itself being part of a final effector complex. The protein is DNA mismatch repair protein MutL of Leptospira interrogans serogroup Icterohaemorrhagiae serovar copenhageni (strain Fiocruz L1-130).